Consider the following 411-residue polypeptide: Gamma-glutamyl phosphate reductase (411 aa).

This sequence belongs to the gamma-glutamyl phosphate reductase family.

The protein resides in the cytoplasm. The enzyme catalyses L-glutamate 5-semialdehyde + phosphate + NADP(+) = L-glutamyl 5-phosphate + NADPH + H(+). The protein operates within amino-acid biosynthesis; L-proline biosynthesis; L-glutamate 5-semialdehyde from L-glutamate: step 2/2. Functionally, catalyzes the NADPH-dependent reduction of L-glutamate 5-phosphate into L-glutamate 5-semialdehyde and phosphate. The product spontaneously undergoes cyclization to form 1-pyrroline-5-carboxylate. In Nautilia profundicola (strain ATCC BAA-1463 / DSM 18972 / AmH), this protein is Gamma-glutamyl phosphate reductase.